An 87-amino-acid polypeptide reads, in one-letter code: X protein (87 aa).

Positions 5 to 16 (LRLTLLELVRRL) are nuclear export signal. The tract at residues 18-87 (GNATIESGRL…PANRKGAAVE (70 aa)) is disordered. The span at 36–48 (DTTTGTTGVTKTT) shows a compositional bias: low complexity.

As to quaternary structure, interacts with P and N proteins. These interactions presumably promote nuclear targeting of the X protein in infected cells. Interacts with host MAVS; this interaction inhibits MAVS-induced apoptosis. Phosphorylated.

It is found in the host nucleus. The protein resides in the host mitochondrion. In terms of biological role, plays an essential role in the inhibition of host apoptosis. Mediates host mitochondria-mediated apoptosis through interaction with the mitochondrial antiviral signaling protein/MAVS and thereby promotes viral persistence in host central nervous system. Within the host nucleus, regulates viral RNA synthesis and polymerase complex assembly. The protein is X protein (P/X) of Borna disease virus 1 (BoDV-1).